The primary structure comprises 395 residues: Chalcone synthase (395 aa).

Residue Cys-169 is part of the active site.

It belongs to the thiolase-like superfamily. Chalcone/stilbene synthases family.

It carries out the reaction (E)-4-coumaroyl-CoA + 3 malonyl-CoA + 3 H(+) = 2',4,4',6'-tetrahydroxychalcone + 3 CO2 + 4 CoA. The protein operates within secondary metabolite biosynthesis; flavonoid biosynthesis. The primary product of this enzyme is 4,2',4',6'-tetrahydroxychalcone (also termed naringenin-chalcone or chalcone) which can under specific conditions spontaneously isomerize into naringenin. This chain is Chalcone synthase (CHS), found in Pinus strobus (Eastern white pine).